The primary structure comprises 567 residues: Alpha-glucosidase (567 aa).

Residues 1–17 (MKAVIVFCLMALSIVDA) form the signal peptide. Asn-88 and Asn-123 each carry an N-linked (GlcNAc...) asparagine glycan. Asp-223 functions as the Nucleophile in the catalytic mechanism. Residue Asn-247 is glycosylated (N-linked (GlcNAc...) asparagine). Glu-286 (proton donor) is an active-site residue. N-linked (GlcNAc...) asparagine glycosylation is found at Asn-290, Asn-313, Asn-319, Asn-499, and Asn-507.

Monomer. Expressed specifically in the hypopharyngeal glands of worker bees. Also found in the brain of worker bees (at protein level).

The enzyme catalyses Hydrolysis of terminal, non-reducing (1-&gt;4)-linked alpha-D-glucose residues with release of alpha-D-glucose.. Its function is as follows. Converts sucrose in nectar to glucose and fructose. The polypeptide is Alpha-glucosidase (Apis mellifera (Honeybee)).